Here is a 213-residue protein sequence, read N- to C-terminus: Orotate phosphoribosyltransferase (213 aa).

Lys-26 contacts 5-phospho-alpha-D-ribose 1-diphosphate. 34 to 35 (FF) is an orotate binding site. 5-phospho-alpha-D-ribose 1-diphosphate is bound by residues 72-73 (YK), Arg-99, Lys-100, Lys-103, His-105, and 124-132 (DDVITAGTA). Residues Thr-128 and Arg-156 each contribute to the orotate site.

The protein belongs to the purine/pyrimidine phosphoribosyltransferase family. PyrE subfamily. Homodimer. Mg(2+) serves as cofactor.

The catalysed reaction is orotidine 5'-phosphate + diphosphate = orotate + 5-phospho-alpha-D-ribose 1-diphosphate. The protein operates within pyrimidine metabolism; UMP biosynthesis via de novo pathway; UMP from orotate: step 1/2. Its function is as follows. Catalyzes the transfer of a ribosyl phosphate group from 5-phosphoribose 1-diphosphate to orotate, leading to the formation of orotidine monophosphate (OMP). This chain is Orotate phosphoribosyltransferase, found in Escherichia coli O157:H7.